Reading from the N-terminus, the 398-residue chain is Lysophosphatidylserine lipase ABHD12 (398 aa).

Basic and acidic residues predominate over residues 1 to 16; that stretch reads MRKRTEPVALEHERRT. Residues 1 to 24 are disordered; the sequence is MRKRTEPVALEHERRTASGSPSAG. Over 1-74 the chain is Cytoplasmic; it reads MRKRTEPVAL…RKGLCFRLRK (74 aa). A helical membrane pass occupies residues 75–95; it reads ILFFVLGLYVAIPFLIKLCPG. The Extracellular portion of the chain corresponds to 96 to 398; sequence IQAKLIFLNF…LGKSEPGRQH (303 aa). An N-linked (GlcNAc...) asparagine glycan is attached at N123. S246 functions as the Nucleophile in the catalytic mechanism. Catalysis depends on charge relay system residues D333 and H372.

Belongs to the serine esterase family.

It localises to the endoplasmic reticulum membrane. The catalysed reaction is 1-(9Z-octadecenoyl)-sn-glycero-3-phospho-L-serine + H2O = sn-glycero-3-phospho-L-serine + (9Z)-octadecenoate + H(+). It carries out the reaction 1-(9Z-octadecenoyl)-sn-glycero-3-phospho-(1'-sn-glycerol) + H2O = sn-glycero-3-phospho-(1'-sn-glycerol) + (9Z)-octadecenoate + H(+). The enzyme catalyses 1-(9Z-octadecenoyl)-sn-glycero-3-phospho-(1D-myo-inositol) + H2O = sn-glycero-3-phospho-1D-myo-inositol + (9Z)-octadecenoate + H(+). It catalyses the reaction 1-(9Z-octadecenoyl)-sn-glycero-3-phosphoethanolamine + H2O = sn-glycero-3-phosphoethanolamine + (9Z)-octadecenoate + H(+). The catalysed reaction is 1-(9Z-octadecenoyl)-sn-glycero-3-phosphocholine + H2O = 1-(9Z-octadecenoyl)-sn-glycerol + phosphocholine + H(+). It carries out the reaction 2-(9Z-octadecenoyl)-glycerol + H2O = glycerol + (9Z)-octadecenoate + H(+). The enzyme catalyses 1-hexadecanoyl-sn-glycero-3-phospho-L-serine + H2O = sn-glycero-3-phospho-L-serine + hexadecanoate + H(+). It catalyses the reaction 2-(5Z,8Z,11Z,14Z-eicosatetraenoyl)-glycerol + H2O = glycerol + (5Z,8Z,11Z,14Z)-eicosatetraenoate + H(+). The catalysed reaction is Hydrolyzes glycerol monoesters of long-chain fatty acids.. It carries out the reaction 1-decanoylglycerol + H2O = decanoate + glycerol + H(+). The enzyme catalyses 1-dodecanoylglycerol + H2O = dodecanoate + glycerol + H(+). It catalyses the reaction 1-tetradecanoylglycerol + H2O = tetradecanoate + glycerol + H(+). The catalysed reaction is 2-hexadecanoylglycerol + H2O = glycerol + hexadecanoate + H(+). It carries out the reaction 1-(9Z-octadecenoyl)-glycerol + H2O = glycerol + (9Z)-octadecenoate + H(+). The enzyme catalyses 2-(9Z,12Z-octadecadienoyl)-glycerol + H2O = (9Z,12Z)-octadecadienoate + glycerol + H(+). It catalyses the reaction 1-(5Z,8Z,11Z,14Z-eicosatetraenoyl)-glycerol + H2O = glycerol + (5Z,8Z,11Z,14Z)-eicosatetraenoate + H(+). The catalysed reaction is 1-(9Z,12Z-octadecadienoyl)-glycerol + H2O = (9Z,12Z)-octadecadienoate + glycerol + H(+). It carries out the reaction 1-hexadecanoylglycerol + H2O = glycerol + hexadecanoate + H(+). The enzyme catalyses 1-octadecanoylglycerol + H2O = octadecanoate + glycerol + H(+). It catalyses the reaction 1-octadecanoyl-2-(9,10-epoxyoctadecanoyl)-sn-glycero-3-phospho-L-serine + H2O = 9,10-epoxyoctadecanoate + 1-octadecanoyl-sn-glycero-3-phosphoserine + H(+). The catalysed reaction is 1-octadecanoyl-2-(10-hydroxyoctadecanoyl)-sn-glycero-3-phospho-L-serine + H2O = 1-octadecanoyl-sn-glycero-3-phosphoserine + 10-hydroxyoctadecanoate + H(+). It carries out the reaction 1-hexadecanoyl-2-(10-hydroxyoctadecanoyl)-sn-glycero-3-phospho-L-serine + H2O = 10-hydroxyoctadecanoate + 1-hexadecanoyl-sn-glycero-3-phospho-L-serine + H(+). Its function is as follows. Lysophosphatidylserine (LPS) lipase that mediates the hydrolysis of lysophosphatidylserine, a class of signaling lipids that regulates immunological and neurological processes. Represents a major lysophosphatidylserine lipase in the brain, thereby playing a key role in the central nervous system. Also able to hydrolyze oxidized phosphatidylserine; oxidized phosphatidylserine is produced in response to severe inflammatory stress and constitutes a proapoptotic 'eat me' signal. Also has monoacylglycerol (MAG) lipase activity: hydrolyzes 2-arachidonoylglycerol (2-AG), thereby acting as a regulator of endocannabinoid signaling pathways. Has a strong preference for very-long-chain lipid substrates; substrate specificity is likely due to improved catalysis and not improved substrate binding. The protein is Lysophosphatidylserine lipase ABHD12 of Bos taurus (Bovine).